We begin with the raw amino-acid sequence, 293 residues long: Ribosomal RNA small subunit methyltransferase H (293 aa).

S-adenosyl-L-methionine is bound by residues 31 to 33, aspartate 49, phenylalanine 76, aspartate 97, and glutamine 104; that span reads GGY.

This sequence belongs to the methyltransferase superfamily. RsmH family.

The protein localises to the cytoplasm. The catalysed reaction is cytidine(1402) in 16S rRNA + S-adenosyl-L-methionine = N(4)-methylcytidine(1402) in 16S rRNA + S-adenosyl-L-homocysteine + H(+). In terms of biological role, specifically methylates the N4 position of cytidine in position 1402 (C1402) of 16S rRNA. The protein is Ribosomal RNA small subunit methyltransferase H of Wolbachia sp. subsp. Drosophila simulans (strain wRi).